Reading from the N-terminus, the 1358-residue chain is DNA-directed RNA polymerase subunit beta (1358 aa).

It belongs to the RNA polymerase beta chain family. As to quaternary structure, the RNAP catalytic core consists of 2 alpha, 1 beta, 1 beta' and 1 omega subunit. When a sigma factor is associated with the core the holoenzyme is formed, which can initiate transcription.

It carries out the reaction RNA(n) + a ribonucleoside 5'-triphosphate = RNA(n+1) + diphosphate. DNA-dependent RNA polymerase catalyzes the transcription of DNA into RNA using the four ribonucleoside triphosphates as substrates. This is DNA-directed RNA polymerase subunit beta from Francisella philomiragia subsp. philomiragia (strain ATCC 25017 / CCUG 19701 / FSC 153 / O#319-036).